The sequence spans 1041 residues: Nuclear migration protein unc-83 (1041 aa).

Disordered regions lie at residues 258–283, 453–498, and 613–646; these read VGHLTASDTEESEADEEDRHSQTETV, IHGQ…LEDD, and IRNRDSDTAPEHSDAAQAYEWDEYNPPQKDDSIS. Positions 456–465 are enriched in basic residues; the sequence is QKKPLRRASR. Over residues 613–626 the composition is skewed to basic and acidic residues; that stretch reads IRNRDSDTAPEHSD. Coiled-coil stretches lie at residues 785–816 and 931–951; these read RSKEDVAKTLDAVTAIERRLSSERQELRDLLA and KAELSIYSNALARLKDRFNDM. Residues 986–1041 enclose the KASH domain; the sequence is TENEPLTIAEAISSSRLIKFTFALSLLAALAAIFYYHVFGKPFGPHVTYVNGPPPV. Residues 1005–1024 traverse the membrane as a helical; Anchor for type IV membrane protein segment; the sequence is FTFALSLLAALAAIFYYHVF.

In terms of assembly, component of the unc-83-unc-84 LINC complex which contains at least unc-83 and unc-84. Within the unc-83-unc-84 LINC complex interacts with unc-84 (via C-terminus); the interaction is probably required to recruit unc-83 to the nuclear envelope where it then recruits dynein and kinesin-1 complexes to regulate nuclear migration. Interacts with bicd-1 and dlc-1. Interacts with nud-2 (via C-terminus); the interaction is direct, and is required for recruitment of nud-2 to the nuclear envelope. Interacts with klc-2; the interaction is direct. In terms of tissue distribution, predominantly expressed in migratory nuclei. Expressed in a variety of cell-types, including cells around the pharynx and in the uterus.

It is found in the nucleus membrane. The protein localises to the nucleus outer membrane. Functionally, cargo-specific adapter that is involved in nuclear migration during development and thereafter. Component of the unc-83-unc-84 LINC (LInker of Nucleoskeleton and Cytoskeleton) complex where it interacts with unc-84 to form a bridge connecting the nuclear envelope to the cytoskeleton which allows for nuclear transport along microtubules. Within the complex, connects the nuclear envelope to the microtubule cytoskeleton through the kinesin-1 light chain protein klc-2 (most likely within the Kinesin 1 motor complex) to regulate nuclear migrations. Moreover, within the complex, also recruits the large microtubule-associated bicd-1-dlc-1-egal-1 and lis-1-nud-2 complexes to the nuclear envelope to regulate both the bidirectional migration of nuclei and the extent of nuclear migrations. Not required for centrosome attachment to the nucleus. In Caenorhabditis elegans, this protein is Nuclear migration protein unc-83.